A 320-amino-acid chain; its full sequence is Probable 5-dehydro-4-deoxyglucarate dehydratase (320 aa).

This sequence belongs to the DapA family.

The enzyme catalyses 5-dehydro-4-deoxy-D-glucarate + H(+) = 2,5-dioxopentanoate + CO2 + H2O. Its pathway is carbohydrate acid metabolism; D-glucarate degradation; 2,5-dioxopentanoate from D-glucarate: step 2/2. The chain is Probable 5-dehydro-4-deoxyglucarate dehydratase from Streptomyces griseus subsp. griseus (strain JCM 4626 / CBS 651.72 / NBRC 13350 / KCC S-0626 / ISP 5235).